The chain runs to 179 residues: Large ribosomal subunit protein uL5 (179 aa).

It belongs to the universal ribosomal protein uL5 family. As to quaternary structure, part of the 50S ribosomal subunit; part of the 5S rRNA/L5/L18/L25 subcomplex. Contacts the 5S rRNA and the P site tRNA. Forms a bridge to the 30S subunit in the 70S ribosome.

Its function is as follows. This is one of the proteins that bind and probably mediate the attachment of the 5S RNA into the large ribosomal subunit, where it forms part of the central protuberance. In the 70S ribosome it contacts protein S13 of the 30S subunit (bridge B1b), connecting the 2 subunits; this bridge is implicated in subunit movement. Contacts the P site tRNA; the 5S rRNA and some of its associated proteins might help stabilize positioning of ribosome-bound tRNAs. This Shewanella woodyi (strain ATCC 51908 / MS32) protein is Large ribosomal subunit protein uL5.